The chain runs to 406 residues: 5-methylthioadenosine/S-adenosylhomocysteine deaminase (406 aa).

Positions 55 and 57 each coordinate Zn(2+). Substrate contacts are provided by Glu-84, Arg-136, Arg-148, and His-173. His-200 is a Zn(2+) binding site. Glu-203 and Asp-279 together coordinate substrate. Asp-279 contributes to the Zn(2+) binding site.

The protein belongs to the metallo-dependent hydrolases superfamily. MTA/SAH deaminase family. The cofactor is Zn(2+).

The enzyme catalyses S-adenosyl-L-homocysteine + H2O + H(+) = S-inosyl-L-homocysteine + NH4(+). It catalyses the reaction S-methyl-5'-thioadenosine + H2O + H(+) = S-methyl-5'-thioinosine + NH4(+). In terms of biological role, catalyzes the deamination of 5-methylthioadenosine and S-adenosyl-L-homocysteine into 5-methylthioinosine and S-inosyl-L-homocysteine, respectively. Is also able to deaminate adenosine. Adenosine-5-monophosphate (AMP) and S-adenosyl-L-methionine (SAM) are not enzyme substrates. The polypeptide is 5-methylthioadenosine/S-adenosylhomocysteine deaminase (mtaD) (Thermotoga maritima (strain ATCC 43589 / DSM 3109 / JCM 10099 / NBRC 100826 / MSB8)).